The following is a 419-amino-acid chain: Zinc finger protein Pegasus (419 aa).

Residue lysine 5 forms a Glycyl lysine isopeptide (Lys-Gly) (interchain with G-Cter in SUMO2) linkage. Positions 36–55 (DKEAETLQGAGTDGDQNGLD) are disordered. C2H2-type zinc fingers lie at residues 82-104 (LKCR…IRIH), 110-132 (HRCH…MRSH), and 138-161 (YKCE…RRKH). Residue lysine 185 forms a Glycyl lysine isopeptide (Lys-Gly) (interchain with G-Cter in SUMO2) linkage. Positions 262-273 (LSSLPPENQNPA) are enriched in polar residues. 2 disordered regions span residues 262-284 (LSSL…PDEK) and 297-356 (VSAV…PTLP). Positions 297-311 (VSAVSASIPQSSSPT) are enriched in low complexity. Positions 332–349 (SEPSAHTSTPSIGNSQPS) are enriched in polar residues. 2 consecutive C2H2-type zinc fingers follow at residues 364-386 (HHCQ…MGCH) and 392-416 (FQCN…RGQH).

Belongs to the Ikaros C2H2-type zinc-finger protein family. Self-associates. Interacts with other family members; IKZF1, IKZF2, IKZF3 and IKZF4.

It is found in the nucleus. Transcriptional repressor that binds the core 5'GNNTGTNG-3' DNA consensus sequence. Involved in megakaryocyte differentiation. The polypeptide is Zinc finger protein Pegasus (Ikzf5) (Mus musculus (Mouse)).